Consider the following 338-residue polypeptide: Glyceraldehyde-3-phosphate dehydrogenase (338 aa).

NAD(+) is bound by residues Arg-12–Ile-13, Asp-34, and Arg-79. D-glyceraldehyde 3-phosphate contacts are provided by residues Ser-150–Thr-152, Thr-181, Thr-210–Gly-211, and Arg-233. Cys-151 serves as the catalytic Nucleophile. Asn-315 contacts NAD(+).

Belongs to the glyceraldehyde-3-phosphate dehydrogenase family. In terms of assembly, homotetramer.

It localises to the cytoplasm. The enzyme catalyses D-glyceraldehyde 3-phosphate + phosphate + NAD(+) = (2R)-3-phospho-glyceroyl phosphate + NADH + H(+). It functions in the pathway carbohydrate degradation; glycolysis; pyruvate from D-glyceraldehyde 3-phosphate: step 1/5. The sequence is that of Glyceraldehyde-3-phosphate dehydrogenase (gpd-1) from Neurospora crassa (strain ATCC 24698 / 74-OR23-1A / CBS 708.71 / DSM 1257 / FGSC 987).